Reading from the N-terminus, the 117-residue chain is Gamma-aminobutyric acid receptor-associated protein-like 1 (117 aa).

Residue G116 is the site of Phosphatidylethanolamine amidated glycine; alternate attachment. G116 is lipidated: Phosphatidylserine amidated glycine; alternate. Position 117 (K117) is a propeptide, removed in mature form.

It belongs to the ATG8 family. As to quaternary structure, interacts with ATG13, OPRK1, RB1CC1 and ULK1. Interacts with TP53INP1 and TP53INP2. Directly interacts with SQSTM1. Interacts with ATG3, ATG7 and MAP15. Interacts with TECPR2. Interacts with TBC1D5. Interacts with MAPK15. Interacts with TRIM5. Interacts with MEFV and TRIM21. Interacts with WDFY3. Interacts with the reticulophagy receptor TEX264. Interacts with UBA5. Interacts with KBTBD6 and KBTBD7; the interaction is direct. Interacts with reticulophagy regulators RETREG1, RETREG2 and RETREG3. Interacts with IRGM. Interacts with DNM2. Interacts with NCOA4 (via C-terminus). Post-translationally, the precursor molecule is cleaved by ATG4 (ATG4A, ATG4B, ATG4C or ATG4D) to expose the glycine at the C-terminus and form the cytosolic form, GABARAPL1-I. The processed form is then activated by APG7L/ATG7, transferred to ATG3 and conjugated to phosphatidylethanolamine (PE) phospholipid to form the membrane-bound form, GABARAPL1-II. During non-canonical autophagy, the processed form is conjugated to phosphatidylserine (PS) phospholipid. ATG4 proteins also mediate the delipidation of PE-conjugated forms required for GABARAPL1 recycling when autophagosomes fuse with lysosomes. In addition, ATG4B and ATG4D mediate delipidation of ATG8 proteins conjugated to PS during non-canonical autophagy. ATG4B constitutes the major protein for proteolytic activation. ATG4D is the main enzyme for delipidation activity.

Its subcellular location is the cytoplasmic vesicle. The protein localises to the autophagosome. It localises to the cytoplasmic vesicle membrane. It is found in the cytoplasm. The protein resides in the cytoskeleton. Its subcellular location is the endoplasmic reticulum. The protein localises to the golgi apparatus. In terms of biological role, ubiquitin-like modifier that increases cell-surface expression of kappa-type opioid receptor through facilitating anterograde intracellular trafficking of the receptor. Involved in formation of autophagosomal vacuoles. While LC3s are involved in elongation of the phagophore membrane, the GABARAP/GATE-16 subfamily is essential for a later stage in autophagosome maturation. Through its interaction with the reticulophagy receptor TEX264, participates in the remodeling of subdomains of the endoplasmic reticulum into autophagosomes upon nutrient stress, which then fuse with lysosomes for endoplasmic reticulum turnover. This chain is Gamma-aminobutyric acid receptor-associated protein-like 1, found in Bos taurus (Bovine).